Consider the following 373-residue polypeptide: MSEKKINLLDLDRKAMRALFADLGEKPFRADQLMKWIYHFGVSDFEEMTNINKVLRQKLAARCEIVAPEISSFQKSTDGTIKFAIHVGEGQEVETVYIPEDDRATLCVSSQVGCALECTFCSTAQQGFNRNLTVSEIVGQIWRVSHFLGFAKDTGDRPITNVVMMGMGEPLLNLANVIPAMDIMLDDFGFSLSKRRVTLSTSGVVPALDKLGDALDVALAVSIHAPNDELRDILVPVNKKYPLQEFLAGIRRYIAKSNANRGRVTVEYVMLDHINDSTEQAHELAKLMEDTPCKVNLIPFNPYPGSPYGRSSNSRIDRFSKVLMEYGLTVIVRKTRGDDIDAACGQLAGDIRDRTKRLAKKRMQENQISVTMN.

Glu94 (proton acceptor) is an active-site residue. Residues Glu100 to Asp339 enclose the Radical SAM core domain. Cys107 and Cys344 form a disulfide bridge. Cys114, Cys118, and Cys121 together coordinate [4Fe-4S] cluster. Residues Gly168–Glu169, Ser200, Ser222–His224, and Asn301 contribute to the S-adenosyl-L-methionine site. The active-site S-methylcysteine intermediate is Cys344.

It belongs to the radical SAM superfamily. RlmN family. Requires [4Fe-4S] cluster as cofactor.

Its subcellular location is the cytoplasm. The enzyme catalyses adenosine(2503) in 23S rRNA + 2 reduced [2Fe-2S]-[ferredoxin] + 2 S-adenosyl-L-methionine = 2-methyladenosine(2503) in 23S rRNA + 5'-deoxyadenosine + L-methionine + 2 oxidized [2Fe-2S]-[ferredoxin] + S-adenosyl-L-homocysteine. It catalyses the reaction adenosine(37) in tRNA + 2 reduced [2Fe-2S]-[ferredoxin] + 2 S-adenosyl-L-methionine = 2-methyladenosine(37) in tRNA + 5'-deoxyadenosine + L-methionine + 2 oxidized [2Fe-2S]-[ferredoxin] + S-adenosyl-L-homocysteine. In terms of biological role, specifically methylates position 2 of adenine 2503 in 23S rRNA and position 2 of adenine 37 in tRNAs. m2A2503 modification seems to play a crucial role in the proofreading step occurring at the peptidyl transferase center and thus would serve to optimize ribosomal fidelity. This Shewanella putrefaciens (strain CN-32 / ATCC BAA-453) protein is Dual-specificity RNA methyltransferase RlmN.